Reading from the N-terminus, the 247-residue chain is Ras-like protein family member 11B (247 aa).

The small GTPase-like stretch occupies residues Ala29–Val247. GTP is bound by residues Gly40–Thr47, Asp87–Val91, and Asn152–Asp155. The segment at Gln205–Asp228 is disordered.

This sequence belongs to the small GTPase superfamily. Ras family.

It carries out the reaction GTP + H2O = GDP + phosphate + H(+). This Xenopus tropicalis (Western clawed frog) protein is Ras-like protein family member 11B.